The primary structure comprises 89 residues: Small ribosomal subunit protein uS15 (89 aa).

Belongs to the universal ribosomal protein uS15 family. As to quaternary structure, part of the 30S ribosomal subunit. Forms a bridge to the 50S subunit in the 70S ribosome, contacting the 23S rRNA.

In terms of biological role, one of the primary rRNA binding proteins, it binds directly to 16S rRNA where it helps nucleate assembly of the platform of the 30S subunit by binding and bridging several RNA helices of the 16S rRNA. Forms an intersubunit bridge (bridge B4) with the 23S rRNA of the 50S subunit in the ribosome. The chain is Small ribosomal subunit protein uS15 from Agrobacterium fabrum (strain C58 / ATCC 33970) (Agrobacterium tumefaciens (strain C58)).